A 282-amino-acid polypeptide reads, in one-letter code: Type 1 encapsulin shell protein (282 aa).

This sequence belongs to the encapsulin family. Family 1 subfamily. Initially thought to form a 180 subunit shell. Forms hollow shells composed of 240 subunits, making a shell about 42-43 nm in diameter. The monomer is capable of assuming 4 different conformations which allows packaging into the icosahedron. The shell has 12 pentameric and 30 hexameric capsomers which form the vertices and faces of the icosahedral nanocompartment.

Its subcellular location is the encapsulin nanocompartment. Shell component of a type 1 encapsulin nanocompartment. Assembles into proteinaceous icosahedral shells 42-43 nm in diameter with an iron- and phosphorus-rich core (1Fe:1.1P) which can store over 23,000-35,000 iron atoms (with a calculated maximum of 83,000 Fe). There are 2 types of negatively charged open pores in the cryo-electron structure; a 3-fold pore where 3 hexamers meet with a minimal size of 7.2 Angstroms and a 5-fold pore where pentamers meet with a minimal size of 2.3 Angstroms. The 2-fold pore seen in other encapsulin nanocompartments is closed. Empty compartments can be generated in E.coli. Both types of pore have extra density in their centers in the structure. 2 different cargo proteins have been identified (IMEF and Fer); when both are expressed in E.coli with the shell protein only IMEF is detected within the nanocompartment. E.coli expressing all 3 genes stores the largest amount of iron and is protected from Fe/H2O2-induced oxidative stress. Part of the iron-mineralizing encapsulin-associated Firmicute (IMEF) system. This Bacillus thermotolerans (Quasibacillus thermotolerans) protein is Type 1 encapsulin shell protein.